The chain runs to 76 residues: uncharacterized protein (76 aa).

It localises to the host cytoplasm. This is an uncharacterized protein from Escherichia phage Mu (Bacteriophage Mu).